Consider the following 272-residue polypeptide: Centromere protein V-like protein 3 (272 aa).

Residues 1–17 (MGRVRNRATAQRRRRKR) show a composition bias toward basic residues. Disordered regions lie at residues 1–23 (MGRVRNRATAQRRRRKRPGDPPA) and 65–95 (RRAREAGSRDPLPSAPLPDPPAPAESPKELD). A compositionally biased stretch (pro residues) spans 77–88 (PSAPLPDPPAPA). Residues 133-246 (HTGGCHCGAV…EEVGGGDPGE (114 aa)) form the CENP-V/GFA domain. Residues Cys-137, Cys-139, Cys-157, Cys-159, Cys-162, Cys-201, and Cys-204 each coordinate Zn(2+). The disordered stretch occupies residues 240–272 (GGGDPGEEAAEEHKAIHKTSSQSAPACPREQEQ).

It belongs to the Gfa family. Zn(2+) is required as a cofactor.

This chain is Centromere protein V-like protein 3, found in Homo sapiens (Human).